The sequence spans 483 residues: FK506-binding protein 4 (483 aa).

Disordered regions lie at residues 41 to 171 (TAEP…EEFV) and 208 to 371 (TGNY…LKKP). Residues 68 to 93 (EEDDDEYLDIDGEDSEDDEESDDEEV) show a composition bias toward acidic residues. 2 stretches are compositionally biased toward basic and acidic residues: residues 108 to 121 (REAAIKKLLEATKE) and 130 to 150 (ADAKPNGKGKKDSKGKAKASE). Acidic residues-rich tracts occupy residues 151 to 167 (SDDEKSDEDDEEGEPNF), 216 to 233 (GQDEEDDEDEEDYSDEEY), and 241 to 256 (LESDSDYESDELDEID). Basic and acidic residues-rich tracts occupy residues 298-309 (LVAKDKKQAEKQ), 323-344 (ENKDVKKEGKSDKKVQFAKDLE), and 351-370 (AKDKLEKKEEKKDDKADLKK). The 87-residue stretch at 397-483 (GDRVSLRYIG…VFDIKLLEIK (87 aa)) folds into the PPIase FKBP-type domain.

Belongs to the FKBP-type PPIase family. FKBP3/4 subfamily. Binds to histones H3 and H4.

The protein localises to the nucleus. The enzyme catalyses [protein]-peptidylproline (omega=180) = [protein]-peptidylproline (omega=0). Functionally, PPIase that acts as a histone chaperone. Histone proline isomerase that increases the rate of cis-trans isomerization at prolines on the histone H3 N-terminal tail. Proline isomerization influences H3 methylation thereby regulating gene expression. This chain is FK506-binding protein 4 (FPR4), found in Chaetomium thermophilum (strain DSM 1495 / CBS 144.50 / IMI 039719) (Thermochaetoides thermophila).